The following is a 420-amino-acid chain: Cell division protein FtsA (420 aa).

The protein belongs to the FtsA/MreB family. As to quaternary structure, self-interacts. Interacts with FtsZ.

Its subcellular location is the cell inner membrane. In terms of biological role, cell division protein that is involved in the assembly of the Z ring. May serve as a membrane anchor for the Z ring. This Escherichia coli O157:H7 protein is Cell division protein FtsA.